A 189-amino-acid chain; its full sequence is Protein GrpE (189 aa).

Residues 1–14 show a composition bias toward basic and acidic residues; that stretch reads MTEKNEEVVEDKNI. Residues 1 to 38 form a disordered region; that stretch reads MTEKNEEVVEDKNISDQTDENLTEEIESEADDLQVEPD. The segment covering 17–35 has biased composition (acidic residues); sequence QTDENLTEEIESEADDLQV.

This sequence belongs to the GrpE family. In terms of assembly, homodimer.

Its subcellular location is the cytoplasm. In terms of biological role, participates actively in the response to hyperosmotic and heat shock by preventing the aggregation of stress-denatured proteins, in association with DnaK and GrpE. It is the nucleotide exchange factor for DnaK and may function as a thermosensor. Unfolded proteins bind initially to DnaJ; upon interaction with the DnaJ-bound protein, DnaK hydrolyzes its bound ATP, resulting in the formation of a stable complex. GrpE releases ADP from DnaK; ATP binding to DnaK triggers the release of the substrate protein, thus completing the reaction cycle. Several rounds of ATP-dependent interactions between DnaJ, DnaK and GrpE are required for fully efficient folding. The protein is Protein GrpE of Leuconostoc mesenteroides subsp. mesenteroides (strain ATCC 8293 / DSM 20343 / BCRC 11652 / CCM 1803 / JCM 6124 / NCDO 523 / NBRC 100496 / NCIMB 8023 / NCTC 12954 / NRRL B-1118 / 37Y).